The primary structure comprises 89 residues: Large ribosomal subunit protein bL28 (89 aa).

The protein belongs to the bacterial ribosomal protein bL28 family.

The sequence is that of Large ribosomal subunit protein bL28 from Chlamydia abortus (strain DSM 27085 / S26/3) (Chlamydophila abortus).